The following is a 96-amino-acid chain: Prokineticin Bm8-a (96 aa).

A signal peptide spans 1 to 19 (MKCFAQIVVLLLVIAFSHG). 5 disulfides stabilise this stretch: Cys26–Cys38, Cys32–Cys50, Cys37–Cys78, Cys60–Cys86, and Cys80–Cys95.

It belongs to the AVIT (prokineticin) family. Expressed by the skin glands.

Its subcellular location is the secreted. Functionally, potent agonist for both PKR1/PROKR1 and PKR2/PROKR2, and inducer of a potent and long-lasting hyperalgesia. Also potentiates capsaicin-induced TRPV1 current, when tested on DRG neurons. At subnanomolar concentrations, this protein both induces potent chemotaxis of macrophages and stimulates LPS-induced production of the pro-inflammatory cytokines IL-1 and IL-12. In vivo, potently stimulates the contraction of the guinea-pig gastrointestinal (GI) smooth muscle (nanomolar concentration). In Bombina maxima (Giant fire-bellied toad), this protein is Prokineticin Bm8-a.